The primary structure comprises 88 residues: Translation initiation factor IF-1 1 (88 aa).

Residues methionine 1–proline 72 enclose the S1-like domain. A disordered region spans residues arginine 66–arginine 88.

Belongs to the IF-1 family. As to quaternary structure, component of the 30S ribosomal translation pre-initiation complex which assembles on the 30S ribosome in the order IF-2 and IF-3, IF-1 and N-formylmethionyl-tRNA(fMet); mRNA recruitment can occur at any time during PIC assembly.

The protein localises to the cytoplasm. Its function is as follows. One of the essential components for the initiation of protein synthesis. Stabilizes the binding of IF-2 and IF-3 on the 30S subunit to which N-formylmethionyl-tRNA(fMet) subsequently binds. Helps modulate mRNA selection, yielding the 30S pre-initiation complex (PIC). Upon addition of the 50S ribosomal subunit IF-1, IF-2 and IF-3 are released leaving the mature 70S translation initiation complex. This Chromobacterium violaceum (strain ATCC 12472 / DSM 30191 / JCM 1249 / CCUG 213 / NBRC 12614 / NCIMB 9131 / NCTC 9757 / MK) protein is Translation initiation factor IF-1 1.